Here is a 124-residue protein sequence, read N- to C-terminus: Large-conductance mechanosensitive channel (124 aa).

Transmembrane regions (helical) follow at residues Val-14 to Leu-34, Asn-37 to Phe-57, and Gly-67 to Val-87.

The protein belongs to the MscL family. In terms of assembly, homopentamer.

Its subcellular location is the cell membrane. Functionally, channel that opens in response to stretch forces in the membrane lipid bilayer. May participate in the regulation of osmotic pressure changes within the cell. The chain is Large-conductance mechanosensitive channel from Lactobacillus acidophilus (strain ATCC 700396 / NCK56 / N2 / NCFM).